The primary structure comprises 125 residues: Large ribosomal subunit protein bL12 (125 aa).

This sequence belongs to the bacterial ribosomal protein bL12 family. Homodimer. Part of the ribosomal stalk of the 50S ribosomal subunit. Forms a multimeric L10(L12)X complex, where L10 forms an elongated spine to which 2 to 4 L12 dimers bind in a sequential fashion. Binds GTP-bound translation factors.

Forms part of the ribosomal stalk which helps the ribosome interact with GTP-bound translation factors. Is thus essential for accurate translation. This chain is Large ribosomal subunit protein bL12, found in Helicobacter pylori (strain ATCC 700392 / 26695) (Campylobacter pylori).